We begin with the raw amino-acid sequence, 134 residues long: Ribonuclease VapC1 (134 aa).

The PINc domain maps to 3–132 (YMLDTNIIIY…RITDLQWQDW (130 aa)). 2 residues coordinate Mg(2+): D6 and D99.

The protein belongs to the PINc/VapC protein family. As to quaternary structure, forms a complex with VapB1. The cofactor is Mg(2+).

Its function is as follows. Toxic component of a type II toxin-antitoxin (TA) system. Upon expression in E.coli inhibits growth in liquid culture. Its toxic effect is neutralized by coexpression with antitoxin VapB1. Degrades RNA but not ss- or ds-DNA in vitro, degradation is inhibited by VapB1 antitoxin. The protein is Ribonuclease VapC1 of Haemophilus influenzae (strain R2866).